The sequence spans 467 residues: 3-isopropylmalate dehydratase large subunit (467 aa).

Positions 347, 407, and 410 each coordinate [4Fe-4S] cluster.

The protein belongs to the aconitase/IPM isomerase family. LeuC type 1 subfamily. Heterodimer of LeuC and LeuD. It depends on [4Fe-4S] cluster as a cofactor.

The enzyme catalyses (2R,3S)-3-isopropylmalate = (2S)-2-isopropylmalate. Its pathway is amino-acid biosynthesis; L-leucine biosynthesis; L-leucine from 3-methyl-2-oxobutanoate: step 2/4. In terms of biological role, catalyzes the isomerization between 2-isopropylmalate and 3-isopropylmalate, via the formation of 2-isopropylmaleate. The sequence is that of 3-isopropylmalate dehydratase large subunit from Synechococcus sp. (strain JA-2-3B'a(2-13)) (Cyanobacteria bacterium Yellowstone B-Prime).